The following is a 510-amino-acid chain: Inositol-3-phosphate synthase (510 aa).

24 residues coordinate NAD(+): G70, G71, N72, N73, D143, I180, Q190, R193, T230, A231, N232, T233, G281, S282, D306, S309, N340, N341, D342, K355, G393, D394, D422, and S423.

It belongs to the myo-inositol 1-phosphate synthase family. It depends on NAD(+) as a cofactor.

Its subcellular location is the cytoplasm. It is found in the cytosol. The protein resides in the nucleus. The catalysed reaction is D-glucose 6-phosphate = 1D-myo-inositol 3-phosphate. Its pathway is polyol metabolism; myo-inositol biosynthesis; myo-inositol from D-glucose 6-phosphate: step 1/2. Key enzyme in myo-inositol biosynthesis pathway that catalyzes the conversion of glucose 6-phosphate to 1-myo-inositol 1-phosphate in a NAD-dependent manner. This is Inositol-3-phosphate synthase (INPS1) from Nicotiana paniculata.